The chain runs to 736 residues: Elongation factor 2 (736 aa).

One can recognise a tr-type G domain in the interval glutamate 18–arginine 261. Residues alanine 27 to threonine 34, aspartate 93 to histidine 97, and asparagine 147 to aspartate 150 contribute to the GTP site. A Diphthamide modification is found at histidine 602.

Belongs to the TRAFAC class translation factor GTPase superfamily. Classic translation factor GTPase family. EF-G/EF-2 subfamily.

It is found in the cytoplasm. Catalyzes the GTP-dependent ribosomal translocation step during translation elongation. During this step, the ribosome changes from the pre-translocational (PRE) to the post-translocational (POST) state as the newly formed A-site-bound peptidyl-tRNA and P-site-bound deacylated tRNA move to the P and E sites, respectively. Catalyzes the coordinated movement of the two tRNA molecules, the mRNA and conformational changes in the ribosome. This Staphylothermus marinus (strain ATCC 43588 / DSM 3639 / JCM 9404 / F1) protein is Elongation factor 2.